The primary structure comprises 477 residues: UDP-glycosyltransferase 71K1 (477 aa).

UDP-alpha-D-glucose-binding positions include serine 285, 350 to 351 (WA), 368 to 376 (HCGWNSILE), and 390 to 393 (YAEQ).

The protein belongs to the UDP-glycosyltransferase family.

Glycosyltransferase that possesses chalcone and flavonol 2'-O-glycosyltransferase activity. Converts phloretin to phlorizin (phloretin 2'-O-glucoside), a potent antioxidant. Possesses glycosyltransferase activity toward quercetin, isoliquiritigenin, butein and caffeic acid. The polypeptide is UDP-glycosyltransferase 71K1 (Malus domestica (Apple)).